Consider the following 311-residue polypeptide: Cytosolic Fe-S cluster assembly factor Nubp1 homolog (311 aa).

[4Fe-4S] cluster is bound by residues C9, C23, C26, and C32. Position 63–70 (63–70 (GKGGVGKS)) interacts with ATP. The [4Fe-4S] cluster site is built by C240 and C243.

It belongs to the Mrp/NBP35 ATP-binding proteins family. NUBP1/NBP35 subfamily. As to quaternary structure, heterotetramer of 2 Nubp1 and 2 Nubp2 chains. [4Fe-4S] cluster serves as cofactor.

The protein localises to the cytoplasm. Functionally, component of the cytosolic iron-sulfur (Fe/S) protein assembly (CIA) machinery. Required for maturation of extramitochondrial Fe-S proteins. The Nubp1-Nubp2 heterotetramer forms a Fe-S scaffold complex, mediating the de novo assembly of an Fe-S cluster and its transfer to target apoproteins. The polypeptide is Cytosolic Fe-S cluster assembly factor Nubp1 homolog (Drosophila pseudoobscura pseudoobscura (Fruit fly)).